The sequence spans 129 residues: UPF0325 protein ESA_03178 (129 aa).

Belongs to the UPF0325 family.

This Cronobacter sakazakii (strain ATCC BAA-894) (Enterobacter sakazakii) protein is UPF0325 protein ESA_03178.